The chain runs to 719 residues: MEFKYSEVVEPSTYYTEGLCEGIDVRKSKFTTLEDRGAIRAHEDWNKHIGPCGEYRGTLGPRFSFISVAVPECIPERLEVISYANEFAFLHDDVTDHVGHDTGEVENDEMMTVFLEAAHTGAIDTSNKVDIRRAGKKRIQSQLFLEMLAIDPECAKTTMKSWARFVEVGSSRQHETRFVELAKYIPYRIMDVGEMFWFGLVTFGLGLHIPDHELELCRELMANAWIAVGLQNDIWSWPKERDAATLHGKDHVVNAIWVLMQEHQTDVDGAMQICRKLIVEYVAKYLEVIEATKNDESISLDLRKYLDAMLYSISGNVVWSLECPRYNPDVSFNKTQLEWMRQGLPSLESCPVLARSPEIDSDESAVSPTADESDSTEDSLGSGSRQDSSLSTGLSLSPVHSNEGKDLQRVDTDHIFFEKAVLEAPYDYIASMPSKGVRDQFIDALNDWLRVPDVKVGKIKDAVRVLHNSSLLLDDFQDNSPLRRGKPSTHNIFGSAQTVNTATYSIIKAIGQIMEFSAGESVQEVMNSIMILFQGQAMDLFWTYNGHVPSEEEYYRMIDQKTGQLFSIATSLLLNAADNEIPRTKIQSCLHRLTRLLGRCFQIRDDYQNLVSADYTKQKGFCEDLDEGKWSLALIHMIHKQRSHMALLNVLSTGRKHGGMTLEQKQFVLDIIEEEKSLDYTRSVMMDLHVQLRAEIGRIEILLDSPNPAMRLLLELLRV.

Residues 1–334 (MEFKYSEVVE…RYNPDVSFNK (334 aa)) are fusicocca-2,10(14)-diene synthase. The Mg(2+) site is built by Asp92 and Asp96. Residues 335 to 719 (TQLEWMRQGL…MRLLLELLRV (385 aa)) form a geranylgeranyl diphosphate synthase region. The interval 358-404 (EIDSDESAVSPTADESDSTEDSLGSGSRQDSSLSTGLSLSPVHSNEG) is disordered. The segment covering 378–400 (DSLGSGSRQDSSLSTGLSLSPVH) has biased composition (polar residues). Residues Lys435, Arg438, and His467 each coordinate isopentenyl diphosphate. 2 residues coordinate Mg(2+): Asp474 and Asp478. Dimethylallyl diphosphate is bound at residue Arg483. Arg484 contributes to the isopentenyl diphosphate binding site. Dimethylallyl diphosphate contacts are provided by Lys561, Thr562, Gln602, Asn609, Lys619, and Lys629.

The protein in the N-terminal section; belongs to the terpene synthase family. This sequence in the C-terminal section; belongs to the FPP/GGPP synthase family. In terms of assembly, hexamer.

The enzyme catalyses geranylgeranyl diphosphate = fusicocca-2,10(14)-diene + diphosphate. It catalyses the reaction isopentenyl diphosphate + (2E,6E)-farnesyl diphosphate = (2E,6E,10E)-geranylgeranyl diphosphate + diphosphate. Its pathway is mycotoxin biosynthesis. Functionally, multifunctional diterpene synthase; part of the 2 gene clusters that mediate the biosynthesis of fusicoccins, diterpene glucosides that display phytohormone-like activity and function as potent activators of plasma membrane H(+)-ATPases in plants by modifying 14-3-3 proteins and cause the plant disease constriction canker. The first step in the pathway is performed by the fusicoccadiene synthase PaFS that possesses both prenyl transferase and terpene cyclase activity, converting isopentenyl diphosphate and dimethylallyl diphosphate into geranylgeranyl diphosphate (GGDP) and successively converting GGDP into fusicocca-2,10(14)-diene, a precursor for fusicoccin H. Fusicoccadiene synthase is an allosteric enzyme for GGPP cyclization that generates 64% fusicoccadiene, 9% delta-araneosene, and one additional unidentified diterpene product, when incubated with GGPP. In the absence of isopentenyl diphosphate (IPP), PaFS can also solvolyze the shorter chain geranyl diphosphate (GPP) and farnesyl diphosphate (FPP) as alternative substrates to yield predominantly acyclic products. FPP is converted to farnesol (60.5%), nerolidol (14.0%), and farnesene (14.0%), while GPP is converted to a mixture of geraniol (59.5%) and linalool (35.0%). The second step is the oxidation at the C-8 position by the cytochrome P450 monooxygenase PaP450-2 to yield fusicocca-2,10(14)-diene-8-beta-ol. The cytochrome P450 monooxygenase PaP450-1 then catalyzes the hydroxylation at the C-16 position to produce fusicocca-2,10(14)-diene-8-beta,16-diol. The dioxygenase fc-dox then catalyzes the 16-oxydation of fusicocca-2,10(14)-diene-8-beta,16-diol to yield an aldehyde (8-beta-hydroxyfusicocca-1,10(14)-dien-16-al). The short-chain dehydrogenase/reductase fc-sdr catalyzes the reduction of the aldehyde to yield fusicocca-1,10(14)-diene-8-beta,16-diol. The next step is the hydroxylation at C-9 performed by the cytochrome P450 monooxygenase PaP450-3 that leads to fusicoccin H aglycon which is glycosylated to fusicoccin H by the O-glycosyltransferase PAGT. Hydroxylation at C-12 by the cytochrome P450 monooxygenase PaP450-4 leads then to the production of fusicoccin Q and is followed by methylation by the O-methyltransferase PAMT to yield fusicoccin P. Fusicoccin P is further converted to fusicoccin J via prenylation by the O-glucose prenyltransferase PaPT. Cytochrome P450 monooxygenase PaP450-5 then performs hydroxylation at C-19 to yield dideacetyl-fusicoccin A which is acetylated to 3'-O-deacetyl-fusicoccin A by the O-acetyltransferase PaAT-2. Finally, a another acetylation by the O-acetyltransferase PaAT-1 yields fusicoccin A. The sequence is that of Fusicoccadiene synthase from Phomopsis amygdali (Fusicoccum amygdali).